A 484-amino-acid polypeptide reads, in one-letter code: Xylulose kinase (484 aa).

77–78 (MH) contributes to the substrate binding site. Asp233 acts as the Proton acceptor in catalysis.

This sequence belongs to the FGGY kinase family. Homodimer.

The catalysed reaction is D-xylulose + ATP = D-xylulose 5-phosphate + ADP + H(+). It catalyses the reaction 1-deoxy-D-xylulose + ATP = 1-deoxy-D-xylulose 5-phosphate + ADP + H(+). Sugar binding is accompanied by a dramatic hinge-bending movement that enhances interactions with Mg-ATP. Its function is as follows. Catalyzes the phosphorylation of D-xylulose to D-xylulose 5-phosphate. Also catalyzes the phosphorylation of 1-deoxy-D-xylulose to 1-deoxy-D-xylulose 5-phosphate, with lower efficiency. Can also use D-ribulose, xylitol and D-arabitol, but D-xylulose is preferred over the other substrates. Has a weak substrate-independent Mg-ATP-hydrolyzing activity. The polypeptide is Xylulose kinase (Escherichia coli (strain K12)).